Here is a 1165-residue protein sequence, read N- to C-terminus: DNA-directed RNA polymerase subunit beta' (1165 aa).

Zn(2+) is bound by residues Cys60, Cys62, Cys75, and Cys78. Positions 449, 451, and 453 each coordinate Mg(2+). Zn(2+)-binding residues include Cys794, Cys868, Cys875, and Cys878.

It belongs to the RNA polymerase beta' chain family. The RNAP catalytic core consists of 2 alpha, 1 beta, 1 beta' and 1 omega subunit. When a sigma factor is associated with the core the holoenzyme is formed, which can initiate transcription. The cofactor is Mg(2+). Requires Zn(2+) as cofactor.

The catalysed reaction is RNA(n) + a ribonucleoside 5'-triphosphate = RNA(n+1) + diphosphate. Its function is as follows. DNA-dependent RNA polymerase catalyzes the transcription of DNA into RNA using the four ribonucleoside triphosphates as substrates. This is DNA-directed RNA polymerase subunit beta' from Acetivibrio thermocellus (strain ATCC 27405 / DSM 1237 / JCM 9322 / NBRC 103400 / NCIMB 10682 / NRRL B-4536 / VPI 7372) (Clostridium thermocellum).